We begin with the raw amino-acid sequence, 317 residues long: Acetyl-coenzyme A carboxylase carboxyl transferase subunit alpha (317 aa).

Residues 40 to 293 (LEKRSADALK…GDIIAASLRS (254 aa)) enclose the CoA carboxyltransferase C-terminal domain.

The protein belongs to the AccA family. Acetyl-CoA carboxylase is a heterohexamer composed of biotin carboxyl carrier protein (AccB), biotin carboxylase (AccC) and two subunits each of ACCase subunit alpha (AccA) and ACCase subunit beta (AccD).

It is found in the cytoplasm. The enzyme catalyses N(6)-carboxybiotinyl-L-lysyl-[protein] + acetyl-CoA = N(6)-biotinyl-L-lysyl-[protein] + malonyl-CoA. Its pathway is lipid metabolism; malonyl-CoA biosynthesis; malonyl-CoA from acetyl-CoA: step 1/1. In terms of biological role, component of the acetyl coenzyme A carboxylase (ACC) complex. First, biotin carboxylase catalyzes the carboxylation of biotin on its carrier protein (BCCP) and then the CO(2) group is transferred by the carboxyltransferase to acetyl-CoA to form malonyl-CoA. This Brucella melitensis biotype 2 (strain ATCC 23457) protein is Acetyl-coenzyme A carboxylase carboxyl transferase subunit alpha.